The following is a 254-amino-acid chain: Aspartate/glutamate leucyltransferase (254 aa).

Belongs to the R-transferase family. Bpt subfamily.

Its subcellular location is the cytoplasm. The catalysed reaction is N-terminal L-glutamyl-[protein] + L-leucyl-tRNA(Leu) = N-terminal L-leucyl-L-glutamyl-[protein] + tRNA(Leu) + H(+). The enzyme catalyses N-terminal L-aspartyl-[protein] + L-leucyl-tRNA(Leu) = N-terminal L-leucyl-L-aspartyl-[protein] + tRNA(Leu) + H(+). In terms of biological role, functions in the N-end rule pathway of protein degradation where it conjugates Leu from its aminoacyl-tRNA to the N-termini of proteins containing an N-terminal aspartate or glutamate. In Xylella fastidiosa (strain 9a5c), this protein is Aspartate/glutamate leucyltransferase.